A 238-amino-acid chain; its full sequence is 1-(5-phosphoribosyl)-5-[(5-phosphoribosylamino)methylideneamino] imidazole-4-carboxamide isomerase (238 aa).

Residue Asp-8 is the Proton acceptor of the active site. Residue Asp-129 is the Proton donor of the active site.

It belongs to the HisA/HisF family.

The protein localises to the cytoplasm. The enzyme catalyses 1-(5-phospho-beta-D-ribosyl)-5-[(5-phospho-beta-D-ribosylamino)methylideneamino]imidazole-4-carboxamide = 5-[(5-phospho-1-deoxy-D-ribulos-1-ylimino)methylamino]-1-(5-phospho-beta-D-ribosyl)imidazole-4-carboxamide. It functions in the pathway amino-acid biosynthesis; L-histidine biosynthesis; L-histidine from 5-phospho-alpha-D-ribose 1-diphosphate: step 4/9. This chain is 1-(5-phosphoribosyl)-5-[(5-phosphoribosylamino)methylideneamino] imidazole-4-carboxamide isomerase, found in Myxococcus xanthus (strain DK1622).